Reading from the N-terminus, the 473-residue chain is Ribulose bisphosphate carboxylase large chain 1 (473 aa).

Substrate-binding residues include asparagine 116 and threonine 166. The Proton acceptor role is filled by lysine 168. Lysine 170 contacts substrate. Mg(2+)-binding residues include lysine 194, aspartate 196, and glutamate 197. Lysine 194 carries the post-translational modification N6-carboxylysine. Residue histidine 287 is the Proton acceptor of the active site. Substrate-binding residues include arginine 288, histidine 320, and serine 372.

It belongs to the RuBisCO large chain family. Type I subfamily. As to quaternary structure, heterohexadecamer of 8 large chains and 8 small chains. It depends on Mg(2+) as a cofactor.

It catalyses the reaction 2 (2R)-3-phosphoglycerate + 2 H(+) = D-ribulose 1,5-bisphosphate + CO2 + H2O. The enzyme catalyses D-ribulose 1,5-bisphosphate + O2 = 2-phosphoglycolate + (2R)-3-phosphoglycerate + 2 H(+). In terms of biological role, ruBisCO catalyzes two reactions: the carboxylation of D-ribulose 1,5-bisphosphate, the primary event in carbon dioxide fixation, as well as the oxidative fragmentation of the pentose substrate. Both reactions occur simultaneously and in competition at the same active site. This Acidithiobacillus ferrooxidans (strain ATCC 23270 / DSM 14882 / CIP 104768 / NCIMB 8455) (Ferrobacillus ferrooxidans (strain ATCC 23270)) protein is Ribulose bisphosphate carboxylase large chain 1.